Reading from the N-terminus, the 94-residue chain is Large ribosomal subunit protein eL42 (94 aa).

Zn(2+) is bound by residues Cys-11, Cys-14, Cys-71, and Cys-74. Residues 11 to 74 (CPFCKRHTIH…LDLRFRCTVC (64 aa)) form a C4-type zinc finger.

The protein belongs to the eukaryotic ribosomal protein eL42 family. As to quaternary structure, part of the 50S ribosomal subunit. Requires Zn(2+) as cofactor.

Its function is as follows. Binds to the 23S rRNA. This is Large ribosomal subunit protein eL42 from Pyrococcus abyssi (strain GE5 / Orsay).